We begin with the raw amino-acid sequence, 404 residues long: Glycosylated lysosomal membrane protein (404 aa).

A signal peptide spans 1–35; sequence MRGSVERGWGWGHCASSPLLLWTLLLFAAPFGLLG. At 36–371 the chain is on the lumenal side; the sequence is EKTRQLSLEV…GRLVPTSPGH (336 aa). N-linked (GlcNAc...) asparagine glycosylation is found at Asn-65, Asn-134, Asn-159, Asn-186, and Asn-229. A helical membrane pass occupies residues 372–392; the sequence is HGSALGAPGLMLLGGGLVLLL. The Cytoplasmic segment spans residues 393–404; that stretch reads HHRKYSEYQSIN. A Lysosomal targeting motif motif is present at residues 400-404; it reads YQSIN.

Belongs to the GLMP family. Interacts (via lumenal domain) with lysosomal protein MFSD1; the interaction starts while both proteins are still in the endoplasmic reticulum and is required for stabilization of MFSD1 in lysosomes but has no direct effect on its targeting to lysosomes or transporter activity. Highly N-glycosylated. N-glycosylation is essential for GLMP stability and for MFSD1 lysosomal localization.

The protein localises to the lysosome membrane. Required to protect lysosomal transporter MFSD1 from lysosomal proteolysis and for MFSD1 lysosomal localization. This is Glycosylated lysosomal membrane protein from Pongo abelii (Sumatran orangutan).